The chain runs to 380 residues: uncharacterized protein (380 aa).

The Peptidase M14 domain occupies 111–369 (APYSMERHHD…DCLAILAEMI (259 aa)). Zn(2+)-binding residues include His-164, Glu-167, and His-257. The Proton donor/acceptor role is filled by Glu-333.

Zn(2+) serves as cofactor.

This is an uncharacterized protein from Zymomonas mobilis subsp. mobilis (strain ATCC 31821 / ZM4 / CP4).